A 104-amino-acid chain; its full sequence is Large ribosomal subunit protein bL21 (104 aa).

This sequence belongs to the bacterial ribosomal protein bL21 family. In terms of assembly, part of the 50S ribosomal subunit. Contacts protein L20.

Its function is as follows. This protein binds to 23S rRNA in the presence of protein L20. This is Large ribosomal subunit protein bL21 from Francisella tularensis subsp. tularensis (strain FSC 198).